A 183-amino-acid chain; its full sequence is Alkyl hydroperoxide reductase AhpD (183 aa).

The active-site Proton donor is the C132. Residues C132 and C135 are joined by a disulfide bond. Catalysis depends on C135, which acts as the Cysteine sulfenic acid (-SOH) intermediate.

Belongs to the AhpD family.

The enzyme catalyses N(6)-[(R)-dihydrolipoyl]-L-lysyl-[lipoyl-carrier protein] + a hydroperoxide = N(6)-[(R)-lipoyl]-L-lysyl-[lipoyl-carrier protein] + an alcohol + H2O. Antioxidant protein with alkyl hydroperoxidase activity. Required for the reduction of the AhpC active site cysteine residues and for the regeneration of the AhpC enzyme activity. The protein is Alkyl hydroperoxide reductase AhpD of Acidobacterium capsulatum (strain ATCC 51196 / DSM 11244 / BCRC 80197 / JCM 7670 / NBRC 15755 / NCIMB 13165 / 161).